Consider the following 121-residue polypeptide: Small ribosomal subunit protein uS13 (121 aa).

Positions 94–121 (GLPVRGQRTRTNARTRKGPRKGAAALKK) are disordered.

Belongs to the universal ribosomal protein uS13 family. Part of the 30S ribosomal subunit. Forms a loose heterodimer with protein S19. Forms two bridges to the 50S subunit in the 70S ribosome.

Its function is as follows. Located at the top of the head of the 30S subunit, it contacts several helices of the 16S rRNA. In the 70S ribosome it contacts the 23S rRNA (bridge B1a) and protein L5 of the 50S subunit (bridge B1b), connecting the 2 subunits; these bridges are implicated in subunit movement. Contacts the tRNAs in the A and P-sites. The chain is Small ribosomal subunit protein uS13 from Verminephrobacter eiseniae (strain EF01-2).